The following is a 245-amino-acid chain: Chromosome partition protein MukE (245 aa).

Residues 213 to 245 (PESIAAEKATADDESAVSNEEDFEYDDNQEGAE) are disordered. The segment covering 224–245 (DDESAVSNEEDFEYDDNQEGAE) has biased composition (acidic residues).

This sequence belongs to the MukE family. Interacts, and probably forms a ternary complex, with MukF and MukB. The complex formation is stimulated by calcium or magnesium.

Its subcellular location is the cytoplasm. It localises to the nucleoid. In terms of biological role, involved in chromosome condensation, segregation and cell cycle progression. May participate in facilitating chromosome segregation by condensation DNA from both sides of a centrally located replisome during cell division. Probably acts via its interaction with MukB and MukF. The polypeptide is Chromosome partition protein MukE (Actinobacillus succinogenes (strain ATCC 55618 / DSM 22257 / CCUG 43843 / 130Z)).